The following is a 264-amino-acid chain: Thymidylate synthase (264 aa).

Arg21 provides a ligand contact to dUMP. His51 contacts (6R)-5,10-methylene-5,6,7,8-tetrahydrofolate. Residue 126–127 (RR) coordinates dUMP. Catalysis depends on Cys146, which acts as the Nucleophile. DUMP is bound by residues 166–169 (RSAD), Asn177, and 207–209 (HLY). Position 169 (Asp169) interacts with (6R)-5,10-methylene-5,6,7,8-tetrahydrofolate. Residue Ala263 participates in (6R)-5,10-methylene-5,6,7,8-tetrahydrofolate binding.

It belongs to the thymidylate synthase family. Bacterial-type ThyA subfamily. In terms of assembly, homodimer.

The protein resides in the cytoplasm. It carries out the reaction dUMP + (6R)-5,10-methylene-5,6,7,8-tetrahydrofolate = 7,8-dihydrofolate + dTMP. The protein operates within pyrimidine metabolism; dTTP biosynthesis. Its function is as follows. Catalyzes the reductive methylation of 2'-deoxyuridine-5'-monophosphate (dUMP) to 2'-deoxythymidine-5'-monophosphate (dTMP) while utilizing 5,10-methylenetetrahydrofolate (mTHF) as the methyl donor and reductant in the reaction, yielding dihydrofolate (DHF) as a by-product. This enzymatic reaction provides an intracellular de novo source of dTMP, an essential precursor for DNA biosynthesis. This is Thymidylate synthase from Chelativorans sp. (strain BNC1).